The primary structure comprises 358 residues: Spermatogenesis-associated protein 22 (358 aa).

Composition is skewed to polar residues over residues 1-12, 30-51, 81-121, and 150-159; these read MKRNLNESSARS, QPLTSNPLQNDPGVSTVSDSYG, PASA…TSLR, and QQQKQFQTPE. Disordered stretches follow at residues 1–51, 81–122, and 150–172; these read MKRN…DSYG, PASA…SLRT, and QQQKQFQTPEFPNLPGHKEAEVP.

As to quaternary structure, component of a multiprotein complex with MEIOB and RPA2. Interacts with MEIOB. Interacts with the complex BRME1:HSF2BP:BRCA2. Specifically expressed in gonadal germ cells, when male and female germ cells progress through prophase of meiosis I.

Its subcellular location is the chromosome. In terms of biological role, meiosis-specific protein required for homologous recombination in meiosis I. The protein is Spermatogenesis-associated protein 22 of Mus musculus (Mouse).